A 1391-amino-acid polypeptide reads, in one-letter code: DNA-directed RNA polymerase subunit beta'' (1391 aa).

Zn(2+) is bound by residues C224, C295, C302, and C305.

The protein belongs to the RNA polymerase beta' chain family. RpoC2 subfamily. In terms of assembly, in plastids the minimal PEP RNA polymerase catalytic core is composed of four subunits: alpha, beta, beta', and beta''. When a (nuclear-encoded) sigma factor is associated with the core the holoenzyme is formed, which can initiate transcription. Requires Zn(2+) as cofactor.

It localises to the plastid. The protein resides in the chloroplast. It catalyses the reaction RNA(n) + a ribonucleoside 5'-triphosphate = RNA(n+1) + diphosphate. Functionally, DNA-dependent RNA polymerase catalyzes the transcription of DNA into RNA using the four ribonucleoside triphosphates as substrates. The protein is DNA-directed RNA polymerase subunit beta'' of Buxus microphylla (Littleleaf boxwood).